The sequence spans 214 residues: 3-demethoxyubiquinol 3-hydroxylase (214 aa).

Glu-63, Glu-93, His-96, Glu-145, Glu-177, and His-180 together coordinate Fe cation.

It belongs to the COQ7 family. The cofactor is Fe cation.

It localises to the cell membrane. The catalysed reaction is a 5-methoxy-2-methyl-3-(all-trans-polyprenyl)benzene-1,4-diol + AH2 + O2 = a 3-demethylubiquinol + A + H2O. It participates in cofactor biosynthesis; ubiquinone biosynthesis. In terms of biological role, catalyzes the hydroxylation of 2-nonaprenyl-3-methyl-6-methoxy-1,4-benzoquinol during ubiquinone biosynthesis. The protein is 3-demethoxyubiquinol 3-hydroxylase of Psychrobacter cryohalolentis (strain ATCC BAA-1226 / DSM 17306 / VKM B-2378 / K5).